The following is a 547-amino-acid chain: ATP synthase subunit alpha (547 aa).

172-179 (GDRKTGKT) serves as a coordination point for ATP.

The protein belongs to the ATPase alpha/beta chains family. As to quaternary structure, F-type ATPases have 2 components, CF(1) - the catalytic core - and CF(0) - the membrane proton channel. CF(1) has five subunits: alpha(3), beta(3), gamma(1), delta(1), epsilon(1). CF(0) has three main subunits: a(1), b(2) and c(9-12). The alpha and beta chains form an alternating ring which encloses part of the gamma chain. CF(1) is attached to CF(0) by a central stalk formed by the gamma and epsilon chains, while a peripheral stalk is formed by the delta and b chains.

It is found in the cell membrane. The enzyme catalyses ATP + H2O + 4 H(+)(in) = ADP + phosphate + 5 H(+)(out). In terms of biological role, produces ATP from ADP in the presence of a proton gradient across the membrane. The alpha chain is a regulatory subunit. This chain is ATP synthase subunit alpha, found in Rhodococcus jostii (strain RHA1).